We begin with the raw amino-acid sequence, 405 residues long: Imidazolonepropionase (405 aa).

Fe(3+) is bound by residues H70 and H72. Residues H70 and H72 each contribute to the Zn(2+) site. The 4-imidazolone-5-propanoate site is built by R79, Y142, and H175. Y142 contributes to the N-formimidoyl-L-glutamate binding site. A Fe(3+)-binding site is contributed by H240. H240 is a binding site for Zn(2+). Position 243 (Q243) interacts with 4-imidazolone-5-propanoate. Position 315 (D315) interacts with Fe(3+). D315 contacts Zn(2+). N317 and G319 together coordinate N-formimidoyl-L-glutamate. Residue T320 participates in 4-imidazolone-5-propanoate binding.

Belongs to the metallo-dependent hydrolases superfamily. HutI family. Zn(2+) is required as a cofactor. It depends on Fe(3+) as a cofactor.

It localises to the cytoplasm. The enzyme catalyses 4-imidazolone-5-propanoate + H2O = N-formimidoyl-L-glutamate. It participates in amino-acid degradation; L-histidine degradation into L-glutamate; N-formimidoyl-L-glutamate from L-histidine: step 3/3. Catalyzes the hydrolytic cleavage of the carbon-nitrogen bond in imidazolone-5-propanoate to yield N-formimidoyl-L-glutamate. It is the third step in the universal histidine degradation pathway. The sequence is that of Imidazolonepropionase from Ectopseudomonas mendocina (strain ymp) (Pseudomonas mendocina).